The following is a 109-amino-acid chain: Acylphosphatase (109 aa).

The Acylphosphatase-like domain occupies 22–109 (RLRARVEGVV…GEFSSFDVVY (88 aa)). Residues Arg37 and Asn55 contribute to the active site.

The protein belongs to the acylphosphatase family.

The enzyme catalyses an acyl phosphate + H2O = a carboxylate + phosphate + H(+). In Arthrobacter sp. (strain FB24), this protein is Acylphosphatase (acyP).